Consider the following 645-residue polypeptide: MDGTVTLSPAPTDLPPVSSLDAGQPTLPPEAPLAMPEQSLREGSLQVRHQRTSPMGIGLRRFYLIGGTLTATAVAVWVMLSVLWPGGFSVLEGCLLGLFVLLFAWIAMSFASAVAGFITVVARAGRKLGIDPDAPLPSLHTRTALLMPTYNEDPRRLLAGLQAIYESVAETGQLEHFDFFVLSDTTREHIGRAEEQVYAELCDSVGGHGRIFYRRRADNAARKAGNVADWVRRFGGNYPQMLILDADSVMTGDTIVRLVAGMEDNPDVGLIQTLPAVVNGQTLFARMQQFGGRVYGPIIAFGVAWWHGAESNYWGHNAIIRTQAFADHAGLPSLRGRKPFGGHVLSHDFVEAALMRRGGWAMHMVPYLQGSYEEGPPTLTDLLVRDRRWCQGNLQHAKVVGAKGLHWISRMHMMIGIGHYFTAPMWGMLMLVGIGIPLAGAGIDLAQGLPFSPARYWHGSSDGNAIWIFVCTMFVLLAPKLLGYIALLLNPRERRACGGAIRAALSILLETVLAALMAPVVMYLQSRGVFEVLAGKDSGWDAQVRDDGKLSWPALIRSYGGLSVFGLFMGTLAYLVSPSLAAWMAPVIVGMVVSIPVVAVTSLRRTGLALRRAGIFCIPEELDPPKVLVRASELRRAAALEPSLI.

Residues Met-1–Pro-28 are disordered. Transmembrane regions (helical) follow at residues Leu-64–Trp-84, Leu-98–Ile-118, Ala-423–Ile-443, Ala-465–Ile-485, Ala-504–Leu-524, Ser-558–Pro-578, and Leu-580–Val-600.

The protein belongs to the glycosyltransferase 2 family. OpgH subfamily.

The protein resides in the cell inner membrane. It participates in glycan metabolism; osmoregulated periplasmic glucan (OPG) biosynthesis. Its function is as follows. Involved in the biosynthesis of osmoregulated periplasmic glucans (OPGs). This chain is Glucans biosynthesis glucosyltransferase H, found in Xanthomonas campestris pv. campestris (strain 8004).